Reading from the N-terminus, the 255-residue chain is ETS-related transcription factor Elf-5 (255 aa).

Residues 33-119 enclose the PNT domain; the sequence is YPAFEHQTAC…FILQSIRSQG (87 aa). Positions 163–244 form a DNA-binding region, ETS; that stretch reads SHLWEFVRDL…VDRRLVYKFG (82 aa).

It belongs to the ETS family.

The protein localises to the nucleus. In terms of biological role, transcriptionally activator that may play a role in regulating the later stages of keratinocytes terminal differentiation. Binds to DNA sequences containing the consensus nucleotide core sequence GGA[AT]. In Bos taurus (Bovine), this protein is ETS-related transcription factor Elf-5 (ELF5).